A 198-amino-acid polypeptide reads, in one-letter code: Probable chemoreceptor glutamine deamidase CheD (198 aa).

This sequence belongs to the CheD family.

It catalyses the reaction L-glutaminyl-[protein] + H2O = L-glutamyl-[protein] + NH4(+). In terms of biological role, probably deamidates glutamine residues to glutamate on methyl-accepting chemotaxis receptors (MCPs), playing an important role in chemotaxis. In Stenotrophomonas maltophilia (strain R551-3), this protein is Probable chemoreceptor glutamine deamidase CheD.